A 203-amino-acid polypeptide reads, in one-letter code: Large ribosomal subunit protein bL25 (203 aa).

Belongs to the bacterial ribosomal protein bL25 family. CTC subfamily. Part of the 50S ribosomal subunit; part of the 5S rRNA/L5/L18/L25 subcomplex. Contacts the 5S rRNA. Binds to the 5S rRNA independently of L5 and L18.

Functionally, this is one of the proteins that binds to the 5S RNA in the ribosome where it forms part of the central protuberance. The chain is Large ribosomal subunit protein bL25 from Cereibacter sphaeroides (strain ATCC 17025 / ATH 2.4.3) (Rhodobacter sphaeroides).